The chain runs to 602 residues: DEAD-box ATP-dependent RNA helicase 53 (602 aa).

Residues 33–43 show a composition bias toward low complexity; that stretch reads ASPLDPCRGPA. Residues 33–76 form a disordered region; the sequence is ASPLDPCRGPAAPEPPRRRAFHGSPSPLGFRSTPASWSSPEAGA. Positions 84-112 match the Q motif motif; the sequence is LEVARLGISPWIVERLAARGITRLFPIQR. In terms of domain architecture, Helicase ATP-binding spans 115 to 288; sequence LDPAMQGKDM…SKYLKDPIII (174 aa). Position 128-135 (128-135) interacts with ATP; that stretch reads ARTGTGKT. Residues 236–239 carry the DEAD box motif; sequence DEAD. The 146-residue stretch at 317 to 462 folds into the Helicase C-terminal domain; the sequence is ILGPLIKEHA…LPKIEVADEA (146 aa). Residues 503-602 form a disordered region; sequence FGDFDGFGSS…GRSGGFDDSN (100 aa).

This sequence belongs to the DEAD box helicase family. DDX21/DDX50 subfamily.

It carries out the reaction ATP + H2O = ADP + phosphate + H(+). In Oryza sativa subsp. japonica (Rice), this protein is DEAD-box ATP-dependent RNA helicase 53.